Consider the following 419-residue polypeptide: Inositol-tetrakisphosphate 1-kinase (419 aa).

Lys-18 lines the 1D-myo-inositol 1,3,4-trisphosphate pocket. Arg-106 and Lys-157 together coordinate ATP. In terms of domain architecture, ATP-grasp spans 117–334 (EAYMKDDRIC…TGGAATEEVA (218 aa)). 1D-myo-inositol 1,3,4-trisphosphate is bound by residues His-167 and Lys-199. Residues 188 to 199 (QNFINHNAVLYK), Ser-214, Ser-232, and Ser-236 contribute to the ATP site. Positions 281, 295, and 297 each coordinate Mg(2+). A 1D-myo-inositol 1,3,4-trisphosphate-binding site is contributed by Asn-297. Lys-388 carries the N6-acetyllysine; by EP300 and CREBBP modification. Ser-401 bears the Phosphoserine mark. Lys-415 carries the post-translational modification N6-acetyllysine; by EP300 and CREBBP.

This sequence belongs to the ITPK1 family. In terms of assembly, monomer. Interacts with GPS1/COPS1. Mg(2+) is required as a cofactor. Acetylation by EP300 and CREBBP destabilizes ITPK1, and down-regulates enzymatic activity. Deacetylated by SIRT1.

The catalysed reaction is 1D-myo-inositol 3,4,5,6-tetrakisphosphate + ATP = 1D-myo-inositol 1,3,4,5,6-pentakisphosphate + ADP + H(+). It catalyses the reaction 1D-myo-inositol 1,3,4-trisphosphate + ATP = 1D-myo-inositol 1,3,4,5-tetrakisphosphate + ADP + H(+). It carries out the reaction 1D-myo-inositol 1,3,4-trisphosphate + ATP = 1D-myo-inositol 1,3,4,6-tetrakisphosphate + ADP + H(+). The enzyme catalyses 1D-myo-inositol 3,4,6-trisphosphate + ATP = 1D-myo-inositol 1,3,4,6-tetrakisphosphate + ADP + H(+). The catalysed reaction is 1D-myo-inositol 1,3,4-trisphosphate + 1D-myo-inositol 1,3,4,5,6-pentakisphosphate = 1D-myo-inositol 3,4,5,6-tetrakisphosphate + 1D-myo-inositol 1,3,4,6-tetrakisphosphate. It catalyses the reaction 1D-myo-inositol 1,3,4-trisphosphate + 1D-myo-inositol 1,3,4,5,6-pentakisphosphate = 1D-myo-inositol 3,4,5,6-tetrakisphosphate + 1D-myo-inositol 1,3,4,5-tetrakisphosphate. Functionally, kinase that can phosphorylate various inositol polyphosphate such as Ins(3,4,5,6)P4 or Ins(1,3,4)P3. Phosphorylates Ins(3,4,5,6)P4 at position 1 to form Ins(1,3,4,5,6)P5. This reaction is thought to have regulatory importance, since Ins(3,4,5,6)P4 is an inhibitor of plasma membrane Ca(2+)-activated Cl(-) channels, while Ins(1,3,4,5,6)P5 is not. Also phosphorylates Ins(1,3,4)P3 on O-5 and O-6 to form Ins(1,3,4,6)P4, an essential molecule in the hexakisphosphate (InsP6) pathway. Also acts as an inositol polyphosphate phosphatase that dephosphorylates Ins(1,3,4,5)P4 and Ins(1,3,4,6)P4 to Ins(1,3,4)P3, and Ins(1,3,4,5,6)P5 to Ins(3,4,5,6)P4. May also act as an isomerase that interconverts the inositol tetrakisphosphate isomers Ins(1,3,4,5)P4 and Ins(1,3,4,6)P4 in the presence of ADP and magnesium. Probably acts as the rate-limiting enzyme of the InsP6 pathway. Modifies TNF-alpha-induced apoptosis by interfering with the activation of TNFRSF1A-associated death domain. Plays an important role in MLKL-mediated necroptosis. Produces highly phosphorylated inositol phosphates such as inositolhexakisphosphate (InsP6) which bind to MLKL mediating the release of an N-terminal auto-inhibitory region leading to its activation. Essential for activated phospho-MLKL to oligomerize and localize to the cell membrane during necroptosis. The protein is Inositol-tetrakisphosphate 1-kinase of Mus musculus (Mouse).